Here is a 333-residue protein sequence, read N- to C-terminus: Transaldolase NQM1 (333 aa).

Lys144 acts as the Schiff-base intermediate with substrate in catalysis.

It belongs to the transaldolase family. Type 1 subfamily. Homodimer.

It carries out the reaction D-sedoheptulose 7-phosphate + D-glyceraldehyde 3-phosphate = D-erythrose 4-phosphate + beta-D-fructose 6-phosphate. The protein operates within carbohydrate degradation; pentose phosphate pathway; D-glyceraldehyde 3-phosphate and beta-D-fructose 6-phosphate from D-ribose 5-phosphate and D-xylulose 5-phosphate (non-oxidative stage): step 2/3. In terms of biological role, transaldolase is important for the balance of metabolites in the pentose-phosphate pathway. The protein is Transaldolase NQM1 (NQM1) of Saccharomyces cerevisiae (strain ATCC 204508 / S288c) (Baker's yeast).